The following is a 347-amino-acid chain: Ferrochelatase (347 aa).

Position 158 (cysteine 158) interacts with [2Fe-2S] cluster. Fe cation contacts are provided by histidine 193 and glutamate 272. Positions 332, 339, and 341 each coordinate [2Fe-2S] cluster.

The protein belongs to the ferrochelatase family. In terms of assembly, homodimer. The cofactor is [2Fe-2S] cluster.

It localises to the cytoplasm. It carries out the reaction heme b + 2 H(+) = protoporphyrin IX + Fe(2+). It functions in the pathway porphyrin-containing compound metabolism; protoheme biosynthesis; protoheme from protoporphyrin-IX: step 1/1. Catalyzes the ferrous insertion into protoporphyrin IX. This Caulobacter vibrioides (strain ATCC 19089 / CIP 103742 / CB 15) (Caulobacter crescentus) protein is Ferrochelatase.